Consider the following 340-residue polypeptide: MTDRLTIRRPDDWHVHLRDGAMLAHVAPYTARQFARAIVMPNLSPPVTTAEEGRAYRDRITAAVPADLDFTPLIVAYLTDATDADEIARGHAEGVFTAAKLYPAHATTGSAHGVTDVANIMGVLERMQDIGMPLLIHGEVTDHDVDIFDREAVFIERTLEPLVRALPGLKIVFEHITTAEAAQFVADAPANVAATITPQHLHINRNAMLVGGIRPHAYCLPVAKREHHRLAVRAAATSGSPKFFLGTDSAPHAVHMKEASCGCAGIFNAPFALESYAMAFDQDGALANFEGFASEHGPRFYGLPLNEGTVTLERAEITVPDRIGDVVPFHAGETIGWRLV.

Zn(2+) is bound by residues H14 and H16. Substrate is bound by residues 16–18 (HLR) and N42. The Zn(2+) site is built by K100, H137, and H175. The residue at position 100 (K100) is an N6-carboxylysine. Residue H137 participates in substrate binding. Residue L220 coordinates substrate. D248 lines the Zn(2+) pocket. D248 is a catalytic residue. Residues H252 and A264 each coordinate substrate.

Belongs to the metallo-dependent hydrolases superfamily. DHOase family. Class II DHOase subfamily. As to quaternary structure, homodimer. Requires Zn(2+) as cofactor.

It catalyses the reaction (S)-dihydroorotate + H2O = N-carbamoyl-L-aspartate + H(+). It participates in pyrimidine metabolism; UMP biosynthesis via de novo pathway; (S)-dihydroorotate from bicarbonate: step 3/3. Functionally, catalyzes the reversible cyclization of carbamoyl aspartate to dihydroorotate. The protein is Dihydroorotase of Sphingopyxis alaskensis (strain DSM 13593 / LMG 18877 / RB2256) (Sphingomonas alaskensis).